The following is a 514-amino-acid chain: 2,3-bisphosphoglycerate-independent phosphoglycerate mutase (514 aa).

Mn(2+)-binding residues include aspartate 14 and serine 64. Serine 64 acts as the Phosphoserine intermediate in catalysis. Substrate contacts are provided by residues histidine 125, 155–156 (RD), arginine 187, arginine 193, 263–266 (RADR), and lysine 336. Residues aspartate 403, histidine 407, aspartate 444, histidine 445, and histidine 463 each contribute to the Mn(2+) site.

It belongs to the BPG-independent phosphoglycerate mutase family. As to quaternary structure, monomer. Requires Mn(2+) as cofactor.

The enzyme catalyses (2R)-2-phosphoglycerate = (2R)-3-phosphoglycerate. It participates in carbohydrate degradation; glycolysis; pyruvate from D-glyceraldehyde 3-phosphate: step 3/5. Catalyzes the interconversion of 2-phosphoglycerate and 3-phosphoglycerate. This chain is 2,3-bisphosphoglycerate-independent phosphoglycerate mutase, found in Salmonella typhi.